The following is a 244-amino-acid chain: Ureidoacrylate amidohydrolase RutB (244 aa).

Catalysis depends on Asp38, which acts as the Proton acceptor. Lys147 is an active-site residue. The Nucleophile role is filled by Cys180.

Belongs to the isochorismatase family. RutB subfamily.

The enzyme catalyses (Z)-3-ureidoacrylate + H2O + H(+) = (Z)-3-aminoacrylate + NH4(+) + CO2. It catalyses the reaction (Z)-3-ureidoacrylate + H2O = (Z)-3-aminoacrylate + carbamate + H(+). The catalysed reaction is (Z)-2-methylureidoacrylate + H2O + H(+) = (Z)-2-methylaminoacrylate + NH4(+) + CO2. Its function is as follows. Hydrolyzes ureidoacrylate to form aminoacrylate and carbamate. The carbamate hydrolyzes spontaneously, thereby releasing one of the nitrogen atoms of the pyrimidine ring as ammonia and one of its carbon atoms as CO2. This Escherichia coli O6:H1 (strain CFT073 / ATCC 700928 / UPEC) protein is Ureidoacrylate amidohydrolase RutB.